Reading from the N-terminus, the 1120-residue chain is Transcription-repair-coupling factor (1120 aa).

The Helicase ATP-binding domain maps to 591 to 756 (DLSNGMLMDR…MTGLKELSII (166 aa)). 604 to 611 (GDVGFGKT) is a binding site for ATP. Residues 709–712 (DEEQ) carry the DEEQ box motif. Residues 777–931 (IIRDALLHEH…GFTIASHDMD (155 aa)) enclose the Helicase C-terminal domain.

This sequence in the N-terminal section; belongs to the UvrB family. It in the C-terminal section; belongs to the helicase family. RecG subfamily.

The protein resides in the cytoplasm. Couples transcription and DNA repair by recognizing RNA polymerase (RNAP) stalled at DNA lesions. Mediates ATP-dependent release of RNAP and its truncated transcript from the DNA, and recruitment of nucleotide excision repair machinery to the damaged site. The chain is Transcription-repair-coupling factor from Rickettsia bellii (strain RML369-C).